The chain runs to 127 residues: Nuclear transport factor 2 (127 aa).

Residue Lys-4 is modified to N6-acetyllysine. The NTF2 domain maps to 10-121 (IGSSFIQHYY…WVCTNDMFRL (112 aa)).

Homodimer. Interacts with RAN (GDP-bound form); the interaction is direct and regulates RAN nuclear import. Interacts with the nucleoporins NUP54, NUP58 and NUP62 (via FG repeats); recruits NUTF2 to the nuclear pore complex a step required for NUTF2-mediated GDP-bound RAN nuclear import. Interacts with CAPG; mediates its nuclear import.

It is found in the cytoplasm. Its subcellular location is the cytosol. The protein localises to the nucleus outer membrane. The protein resides in the nucleus. It localises to the nuclear pore complex. It is found in the nucleus inner membrane. Its subcellular location is the nucleoplasm. Mediates the import of GDP-bound RAN from the cytoplasm into the nucleus which is essential for the function of RAN in cargo receptor-mediated nucleocytoplasmic transport. Thereby, plays indirectly a more general role in cargo receptor-mediated nucleocytoplasmic transport. Interacts with GDP-bound RAN in the cytosol, recruits it to the nuclear pore complex via its interaction with nucleoporins and promotes its nuclear import. The sequence is that of Nuclear transport factor 2 from Bos taurus (Bovine).